The sequence spans 418 residues: MGSSSFYRVLLLVGFCAPIFCMLSSNPYNQESSHLPSMKKNPASQVSPSNTRFSFLLYQRLAQENPGQNILFSPVSISTSLAMLSLGARSATKTQILRTLGFNFTWVSEPTIHMGFEYLVRSLNKCHQGRELRMGSVLFIRKELQLQATFLDRVKKLYGAKVFSEDFSNAATAQAQINSYVEKETKGKVVDVIQDLDSQTAMVLVNHIFFKANWTQPFSTANTNKSFPFLLSKGTTVHVPMMHQTESFAFGVDKELGCSILQMDYRGDAVAFFVLPGKGKMRQLEKSLSARRLRKWSRSLQKRWIKVFIPKFSISASYNLETILPKMGIRDAFNSNADFSGITKTHFLQVSKAAHKAVLDVSEEGTEAAAATTTKLIVRSRDTPSSIIAFKEPFLILLLDKNTESVLFLGKVENPRKM.

The signal sequence occupies residues 1 to 25 (MGSSSFYRVLLLVGFCAPIFCMLSS). 3 N-linked (GlcNAc...) asparagine glycosylation sites follow: N103, N213, and N224.

It belongs to the serpin family.

The protein localises to the secreted. The polypeptide is Serpin A9 (Serpina9) (Mus musculus (Mouse)).